We begin with the raw amino-acid sequence, 678 residues long: Secretin ExeD (678 aa).

The N-terminal stretch at 1–25 (MINKGKSWRLATVAAALMMAGSAWA) is a signal peptide. The segment at 26–122 (TEYSASFKNA…VVDETNPGIG (97 aa)) is N0. The interval 124–188 (EMVTRVVPVR…EVVRRVDKAG (65 aa)) is N1. Residues 189-264 (DQEVDIIKLR…MVRQLDRDLQ (76 aa)) form an N2 region. The segment at 267-347 (GNTRVFYLKY…ELEQVVAKLD (81 aa)) is N3. The secretin stretch occupies residues 352–602 (QVLVEAIIVE…VFIRPTILRD (251 aa)). The tract at residues 604-678 (HVYSGISSNK…GAQPFVQGNK (75 aa)) is s domain.

The protein belongs to the bacterial secretin family. GSP D subfamily. In terms of assembly, forms a cylindrical channel with 15 subunits.

The protein resides in the cell outer membrane. Functionally, involved in a type II secretion system (T2SS, formerly general secretion pathway, GSP) for the export of proteins. This subunit forms the outer membrane channel. This Aeromonas salmonicida protein is Secretin ExeD (exeD).